The primary structure comprises 549 residues: Myotubularin-related protein 9 (549 aa).

Methionine 1 is modified (N-acetylmethionine). Positions 4 to 99 (AELIKTPRVD…LNIASSIEAL (96 aa)) constitute a GRAM domain. A Myotubularin phosphatase domain is found at 123–498 (GWHSFLPEQE…QSLQLWEGIF (376 aa)). Residues 508-542 (LDEAYEEMVNIIEYNKELQAKVNLLRRQLAELETE) adopt a coiled-coil conformation. The residue at position 548 (serine 548) is a Phosphoserine.

Belongs to the protein-tyrosine phosphatase family. Non-receptor class myotubularin subfamily. In terms of assembly, homodimer. Heterodimer (via C-terminus) with lipid phosphatase MTMR6 (via C-terminus). Heterodimer (via coiled coil domain) with lipid phosphatase MTMR7 (via C-terminus). Heterodimer with lipid phosphatase MTMR8.

The protein resides in the cytoplasm. Its subcellular location is the cell projection. The protein localises to the ruffle membrane. It is found in the perinuclear region. It localises to the endoplasmic reticulum. In terms of biological role, acts as an adapter for myotubularin-related phosphatases. Increases lipid phosphatase MTMR6 catalytic activity, specifically towards phosphatidylinositol 3,5-bisphosphate, and MTMR6 binding affinity for phosphorylated phosphatidylinositols. Positively regulates lipid phosphatase MTMR7 catalytic activity. Increases MTMR8 catalytic activity towards phosphatidylinositol 3-phosphate. The formation of the MTMR6-MTMR9 complex, stabilizes both MTMR6 and MTMR9 protein levels. Stabilizes MTMR8 protein levels. Plays a role in the late stages of macropinocytosis possibly by regulating MTMR6-mediated dephosphorylation of phosphatidylinositol 3-phosphate in membrane ruffles. Negatively regulates autophagy, in part via its association with MTMR8. Negatively regulates DNA damage-induced apoptosis, in part via its association with MTMR6. Does not bind mono-, di- and tri-phosphorylated phosphatidylinositols, phosphatidic acid and phosphatidylserine. The sequence is that of Myotubularin-related protein 9 (MTMR9) from Bos taurus (Bovine).